A 526-amino-acid chain; its full sequence is Peptide chain release factor 3 (526 aa).

In terms of domain architecture, tr-type G spans 9–277; that stretch reads DKRRTFAIIS…GIVEWAPKPQ (269 aa). Residues 18–25, 86–90, and 140–143 each bind GTP; these read SHPDAGKT, DTPGH, and NKLD.

Belongs to the TRAFAC class translation factor GTPase superfamily. Classic translation factor GTPase family. PrfC subfamily.

The protein resides in the cytoplasm. In terms of biological role, increases the formation of ribosomal termination complexes and stimulates activities of RF-1 and RF-2. It binds guanine nucleotides and has strong preference for UGA stop codons. It may interact directly with the ribosome. The stimulation of RF-1 and RF-2 is significantly reduced by GTP and GDP, but not by GMP. The sequence is that of Peptide chain release factor 3 from Shewanella sediminis (strain HAW-EB3).